The following is a 194-amino-acid chain: MTGIMDSVEMPKLPENQKTFAGIPEAVFLEEIDTFMSQPENENCEKVLQRLDEQHGKYRFMACNLEARRRKLKSQIPDLERSLEMVNVLRKEDEERETQFLLSDQVFIKTLVPPTKTVYLWLGASVMLEYPLDEAEALLNQNITSAVGNLKSVEHDQDFLRDQITTTEVNMARVYNWGVKKRQAATKTTATTPS.

It belongs to the prefoldin subunit alpha family. Heterohexamer of two PFD-alpha type and four PFD-beta type subunits. Interacts with itself. Interacts with Vhl and betaTub56D/tubulin beta-1 chain. Interacts with tubulin alpha-beta heterodimers by itself or in complex with Vhl. Does not interact with microtubules (MTs). Expressed in larval central nervous system (CNS) and pupal testis (at protein level).

It localises to the cytoplasm. Its function is as follows. Binds specifically to cytosolic chaperonin (c-CPN) and transfers target proteins to it. Binds to nascent polypeptide chain and promotes folding in an environment in which there are many competing pathways for nonnative proteins. Required for tubulin stability and spindle and centrosome formation in cooperation with Vhl. In Drosophila melanogaster (Fruit fly), this protein is Prefoldin subunit 3 (mgr).